The primary structure comprises 153 residues: Superoxide dismutase [Cu-Zn] (153 aa).

Cu cation is bound by residues His-45, His-47, and His-62. Residues Cys-56 and Cys-145 are joined by a disulfide bond. 4 residues coordinate Zn(2+): His-62, His-70, His-79, and Asp-82. His-119 is a Cu cation binding site.

The protein belongs to the Cu-Zn superoxide dismutase family. In terms of assembly, homodimer. Cu cation serves as cofactor. The cofactor is Zn(2+).

It localises to the cytoplasm. It catalyses the reaction 2 superoxide + 2 H(+) = H2O2 + O2. Destroys radicals which are normally produced within the cells and which are toxic to biological systems. This Drosophila teissieri (Fruit fly) protein is Superoxide dismutase [Cu-Zn].